We begin with the raw amino-acid sequence, 298 residues long: Aquaporin NIP2-1 (298 aa).

Asparagine 4, asparagine 13, and asparagine 26 each carry an N-linked (GlcNAc...) asparagine glycan. 2 helical membrane-spanning segments follow: residues valine 51–isoleucine 71 and serine 85–alanine 105. Residues asparagine 108–alanine 110 carry the NPA 1 motif. Transmembrane regions (helical) follow at residues isoleucine 124–leucine 144, serine 166–threonine 186, and leucine 194–serine 214. An NPA 2 motif is present at residues asparagine 219–alanine 221. Residues tryptophan 237–isoleucine 257 form a helical membrane-spanning segment.

It belongs to the MIP/aquaporin (TC 1.A.8) family. NIP (TC 1.A.8.12) subfamily. In terms of tissue distribution, mainly expressed in the roots. In roots, it localizes in the main and lateral roots, but not in root hairs. Within a root, it localizes on the plasma membrane of the distal side of both exodermis and endodermis, where casparian strips exist (at protein level). Expressed low levels in leaves and anthers.

Its subcellular location is the cell membrane. In terms of biological role, silicon influx transporter responsible for silicon transport from the external solution to the root cells. Is coupled with the silicon efflux transporter LSI2 in both exodermal and endodermal root cells for an efficient silicon transport across the cells into the stele. Silicon is beneficial to plant growth and helps plants to overcome abiotic and biotic stresses by preventing lodging (falling over) and increasing resistance to pests and diseases, as well as other stresses. Is coupled with LSI2 transporter in roots for efficient uptake of arsenite, which is further dispatched in shoots and grains. Mediates uptake of methylated arsenic species in roots. The chain is Aquaporin NIP2-1 from Oryza sativa subsp. japonica (Rice).